The chain runs to 390 residues: Putative transposase YncI (390 aa).

The protein belongs to the transposase 11 family.

This Escherichia coli O157:H7 protein is Putative transposase YncI (yncI).